Here is a 1038-residue protein sequence, read N- to C-terminus: Bone morphogenetic protein receptor type-2 (1038 aa).

The N-terminal stretch at 1–26 is a signal peptide; the sequence is MTSSLHRPFRVPWLLWAVLLVSTTAA. At 27 to 150 the chain is on the extracellular side; sequence SQNQERLCAF…PPHSFNRDET (124 aa). Cystine bridges form between Cys34-Cys66, Cys60-Cys84, Cys94-Cys117, Cys99-Cys116, and Cys118-Cys123. Asn55 carries N-linked (GlcNAc...) asparagine glycosylation. Asn110 is a glycosylation site (N-linked (GlcNAc...) asparagine). The N-linked (GlcNAc...) asparagine glycan is linked to Asn126. Residues 151-171 traverse the membrane as a helical segment; that stretch reads IIIALASVSVLAVLIVALCFG. The Cytoplasmic segment spans residues 172–1038; that stretch reads YRMLTGDRKQ…VSKDIGMNCL (867 aa). Residues 203-504 enclose the Protein kinase domain; the sequence is LKLLELIGRG…QCAEERMAEL (302 aa). ATP is bound by residues 209–217, Lys230, and 280–282; these read IGRGRYGAV and EYY. The Proton acceptor role is filled by Asp333. Residues 337-338 and Asp351 contribute to the ATP site; that span reads RN. Thr379 bears the Phosphothreonine mark. Position 586 is a phosphoserine (Ser586). The disordered stretch occupies residues 593–626; it reads QAQARIPSPETSVTSLSTNTTTTNTTGLTPSTGM. The span at 603-626 shows a compositional bias: low complexity; it reads TSVTSLSTNTTTTNTTGLTPSTGM. 2 positions are modified to phosphoserine: Ser680 and Ser681. The tract at residues 746–769 is disordered; that stretch reads PKQQNLPKRPTSLPLNTKNSTKEP. Ser843 carries the post-translational modification Phosphoserine. Residues 872–896 show a composition bias toward basic and acidic residues; sequence RREQQAGHDEGVLDRLVDRRERPLE. A disordered region spans residues 872 to 974; it reads RREQQAGHDE…SGSGEKIKRR (103 aa). 2 stretches are compositionally biased toward polar residues: residues 909-924 and 937-964; these read PCSE…TSTA and RPNS…QDGK.

The protein belongs to the protein kinase superfamily. TKL Ser/Thr protein kinase family. TGFB receptor subfamily. As to quaternary structure, interacts with GDF5. Interacts with BMP4. Interacts with SCUBE3. Interacts with TSC22D1/TSC-22. Interacts with activin A/INHBA. The cofactor is Mg(2+). Requires Mn(2+) as cofactor.

It is found in the cell membrane. The catalysed reaction is L-threonyl-[receptor-protein] + ATP = O-phospho-L-threonyl-[receptor-protein] + ADP + H(+). It carries out the reaction L-seryl-[receptor-protein] + ATP = O-phospho-L-seryl-[receptor-protein] + ADP + H(+). Functionally, on ligand binding, forms a receptor complex consisting of two type II and two type I transmembrane serine/threonine kinases. Type II receptors phosphorylate and activate type I receptors which autophosphorylate, then bind and activate SMAD transcriptional regulators. Can also mediate signaling through the activation of the p38MAPK cascade. Binds to BMP7, BMP2 and, less efficiently, BMP4. Binding is weak but enhanced by the presence of type I receptors for BMPs. Mediates induction of adipogenesis by GDF6. Promotes signaling also by binding to activin A/INHBA. The sequence is that of Bone morphogenetic protein receptor type-2 (Bmpr2) from Mus musculus (Mouse).